We begin with the raw amino-acid sequence, 1088 residues long: V-type proton ATPase catalytic subunit A (1088 aa).

Gly257–Thr264 contacts ATP. Residues Leu485 to Ile662 enclose the DOD-type homing endonuclease domain.

Belongs to the ATPase alpha/beta chains family. In terms of assembly, V-ATPase is a heteromultimeric enzyme composed of a peripheral catalytic V1 complex (components A to H) attached to an integral membrane V0 proton pore complex (components: a, c, c', c'', d, e, f and VOA1). This protein undergoes a protein self splicing that involves a post-translational excision of the VDE intervening region (intein) followed by peptide ligation.

It is found in the vacuole membrane. It carries out the reaction ATP + H2O + 4 H(+)(in) = ADP + phosphate + 5 H(+)(out). Catalytic subunit of the V1 complex of vacuolar(H+)-ATPase (V-ATPase), a multisubunit enzyme composed of a peripheral complex (V1) that hydrolyzes ATP and a membrane integral complex (V0) that translocates protons. V-ATPase is responsible for acidifying and maintaining the pH of intracellular compartments. Its function is as follows. VDE is an endonuclease that can cleave at a site present in a VMA1 allele that lacks the derived endonuclease segment of the open reading frame; cleavage at this site only occurs during meiosis and initiates 'homing', a genetic event that converts a VMA1 allele lacking VDE into one that contains it. This Candida tropicalis (Yeast) protein is V-type proton ATPase catalytic subunit A (VMA1).